Here is a 175-residue protein sequence, read N- to C-terminus: Bcl-2-related protein A1 (175 aa).

It belongs to the Bcl-2 family. As to quaternary structure, interacts directly with BCL2L11/BIM, BAK1, BID, BMF and BBC3. Interacts directly with PMAIP1. Interacts with BOP. Interacts with ING4. Interacts with UBQLN4.

It localises to the cytoplasm. In terms of biological role, retards apoptosis induced by IL-3 deprivation. May function in the response of hemopoietic cells to external signals and in maintaining endothelial survival during infection. Can inhibit apoptosis induced by serum starvation in the mammary epithelial cell line HC11. The chain is Bcl-2-related protein A1 (BCL2A1) from Bos taurus (Bovine).